We begin with the raw amino-acid sequence, 278 residues long: Delta(3,5)-Delta(2,4)-dienoyl-CoA isomerase, peroxisomal (278 aa).

Position 1 is an N-acetylmethionine (M1). Residues 69-73 and G128 each bind substrate; that span reads SGIDL. The Microbody targeting signal signature appears at 276-278; sequence AKL.

The protein belongs to the enoyl-CoA hydratase/isomerase family. As to expression, expressed in roots, leaves, stems and flowers.

The protein resides in the peroxisome. It carries out the reaction a (3E,5Z)-dienoyl-CoA = a (2E,4E)-(5,6-saturated)-dienoyl-CoA. Its pathway is lipid metabolism; fatty acid beta-oxidation. In terms of biological role, converts 3,5-dienoyl-CoAs to the corresponding 2,4-dienoyl-CoAs. Involved in degradation of unsaturated fatty acids. This chain is Delta(3,5)-Delta(2,4)-dienoyl-CoA isomerase, peroxisomal, found in Arabidopsis thaliana (Mouse-ear cress).